Here is a 358-residue protein sequence, read N- to C-terminus: Methylthioribose-1-phosphate isomerase (358 aa).

Substrate is bound by residues 54-56, Arg96, and Gln205; that span reads RGA. Asp246 serves as the catalytic Proton donor. 256 to 257 is a substrate binding site; that stretch reads NK.

Belongs to the eIF-2B alpha/beta/delta subunits family. MtnA subfamily.

The enzyme catalyses 5-(methylsulfanyl)-alpha-D-ribose 1-phosphate = 5-(methylsulfanyl)-D-ribulose 1-phosphate. It functions in the pathway amino-acid biosynthesis; L-methionine biosynthesis via salvage pathway; L-methionine from S-methyl-5-thio-alpha-D-ribose 1-phosphate: step 1/6. Catalyzes the interconversion of methylthioribose-1-phosphate (MTR-1-P) into methylthioribulose-1-phosphate (MTRu-1-P). The polypeptide is Methylthioribose-1-phosphate isomerase (Pseudomonas aeruginosa (strain UCBPP-PA14)).